Consider the following 336-residue polypeptide: Pyridoxal 5'-phosphate synthase subunit PdxS (336 aa).

D33 contacts D-ribose 5-phosphate. The active-site Schiff-base intermediate with D-ribose 5-phosphate is the K90. G162 is a binding site for D-ribose 5-phosphate. Position 174 (R174) interacts with D-glyceraldehyde 3-phosphate. D-ribose 5-phosphate contacts are provided by residues G260 and 281 to 282 (GS).

It belongs to the PdxS/SNZ family. As to quaternary structure, in the presence of PdxT, forms a dodecamer of heterodimers.

It carries out the reaction aldehydo-D-ribose 5-phosphate + D-glyceraldehyde 3-phosphate + L-glutamine = pyridoxal 5'-phosphate + L-glutamate + phosphate + 3 H2O + H(+). It participates in cofactor biosynthesis; pyridoxal 5'-phosphate biosynthesis. Its function is as follows. Catalyzes the formation of pyridoxal 5'-phosphate from ribose 5-phosphate (RBP), glyceraldehyde 3-phosphate (G3P) and ammonia. The ammonia is provided by the PdxT subunit. Can also use ribulose 5-phosphate and dihydroxyacetone phosphate as substrates, resulting from enzyme-catalyzed isomerization of RBP and G3P, respectively. The chain is Pyridoxal 5'-phosphate synthase subunit PdxS from Picrophilus torridus (strain ATCC 700027 / DSM 9790 / JCM 10055 / NBRC 100828 / KAW 2/3).